The chain runs to 362 residues: Cobalt-precorrin-5B C(1)-methyltransferase (362 aa).

Belongs to the CbiD family.

It carries out the reaction Co-precorrin-5B + S-adenosyl-L-methionine = Co-precorrin-6A + S-adenosyl-L-homocysteine. The protein operates within cofactor biosynthesis; adenosylcobalamin biosynthesis; cob(II)yrinate a,c-diamide from sirohydrochlorin (anaerobic route): step 6/10. Its function is as follows. Catalyzes the methylation of C-1 in cobalt-precorrin-5B to form cobalt-precorrin-6A. The sequence is that of Cobalt-precorrin-5B C(1)-methyltransferase from Burkholderia cenocepacia (strain HI2424).